A 250-amino-acid chain; its full sequence is Isoprenyl transferase (250 aa).

Asp26 is an active-site residue. Asp26 lines the Mg(2+) pocket. Residues 27–30, Trp31, Arg39, His43, and 71–73 each bind substrate; these read GNGR and STE. The Proton acceptor role is filled by Asn74. Residues Trp75, Arg77, Arg198, and 204-206 each bind substrate; that span reads RLS. Position 217 (Glu217) interacts with Mg(2+).

This sequence belongs to the UPP synthase family. Homodimer. It depends on Mg(2+) as a cofactor.

In terms of biological role, catalyzes the condensation of isopentenyl diphosphate (IPP) with allylic pyrophosphates generating different type of terpenoids. The chain is Isoprenyl transferase from Streptococcus agalactiae serotype V (strain ATCC BAA-611 / 2603 V/R).